The chain runs to 364 residues: Probable tartrate dehydrogenase/decarboxylase TtuC (364 aa).

Mn(2+) contacts are provided by aspartate 222, aspartate 246, and aspartate 250.

This sequence belongs to the isocitrate and isopropylmalate dehydrogenases family. Mg(2+) is required as a cofactor. It depends on Mn(2+) as a cofactor. Requires K(+) as cofactor.

It is found in the cytoplasm. The enzyme catalyses tartrate + NAD(+) = 2-hydroxy-3-oxosuccinate + NADH + H(+). The catalysed reaction is (2R,3S)-tartrate + NAD(+) = 2-hydroxy-3-oxosuccinate + NADH + H(+). It carries out the reaction (2R,3R)-tartrate + NAD(+) = 2-hydroxy-3-oxosuccinate + NADH + H(+). It catalyses the reaction (2R,3R)-tartrate + H(+) = (R)-glycerate + CO2. The enzyme catalyses (R)-malate + NAD(+) = pyruvate + CO2 + NADH. It functions in the pathway carbohydrate acid metabolism; tartrate degradation; 2-hydroxy-3-oxosuccinate from L-tartrate: step 1/1. The protein operates within carbohydrate acid metabolism; tartrate degradation; 2-hydroxy-3-oxosuccinate from meso-tartrate: step 1/1. It participates in carbohydrate acid metabolism; tartrate degradation; D-glycerate from L-tartrate: step 1/1. Functionally, has multiple catalytic activities. Apart from catalyzing the oxidation of (+)-tartrate to oxaloglycolate, also converts meso-tartrate to D-glycerate and catalyzes the oxidative decarboxylation of D-malate to pyruvate. The chain is Probable tartrate dehydrogenase/decarboxylase TtuC (ttuC) from Agrobacterium vitis (Rhizobium vitis).